The following is a 215-amino-acid chain: Ribonuclease HII (215 aa).

The region spanning 19–213 is the RNase H type-2 domain; the sequence is QTVAGVDEVG…SLRQPSQQID (195 aa). Residues Asp-25, Glu-26, and Asp-121 each contribute to the a divalent metal cation site.

Belongs to the RNase HII family. It depends on Mn(2+) as a cofactor. Mg(2+) serves as cofactor.

The protein localises to the cytoplasm. It catalyses the reaction Endonucleolytic cleavage to 5'-phosphomonoester.. In terms of biological role, endonuclease that specifically degrades the RNA of RNA-DNA hybrids. This Synechococcus elongatus (strain ATCC 33912 / PCC 7942 / FACHB-805) (Anacystis nidulans R2) protein is Ribonuclease HII.